The primary structure comprises 600 residues: uncharacterized protein (600 aa).

4Fe-4S ferredoxin-type domains follow at residues 14–44 and 53–82; these read RLAIIDYDRCQPKKCSMECMKYCPGVRMGEK and GKPVISEVLCSGCGICVKRCPFKAISIIGL. ABC transporter domains lie at 77-318 and 348-563; these read ISII…YLYG and LLSY…LKEM. Residues 117 to 124 and 380 to 387 each bind ATP; these read GQNGIGKS and GPNGIGKT. The segment covering 569-594 has biased composition (basic and acidic residues); that stretch reads RDPETGRPRANKEGSQRDIMQKEKGE. A disordered region spans residues 569–600; that stretch reads RDPETGRPRANKEGSQRDIMQKEKGEYYYVDE.

This sequence belongs to the ABC transporter superfamily.

This is an uncharacterized protein from Methanocaldococcus jannaschii (strain ATCC 43067 / DSM 2661 / JAL-1 / JCM 10045 / NBRC 100440) (Methanococcus jannaschii).